We begin with the raw amino-acid sequence, 291 residues long: Acetylglutamate kinase (291 aa).

Substrate contacts are provided by residues 61–62 (GG), arginine 83, and asparagine 187.

This sequence belongs to the acetylglutamate kinase family. ArgB subfamily.

It localises to the cytoplasm. It catalyses the reaction N-acetyl-L-glutamate + ATP = N-acetyl-L-glutamyl 5-phosphate + ADP. The protein operates within amino-acid biosynthesis; L-arginine biosynthesis; N(2)-acetyl-L-ornithine from L-glutamate: step 2/4. Catalyzes the ATP-dependent phosphorylation of N-acetyl-L-glutamate. This Methanoregula boonei (strain DSM 21154 / JCM 14090 / 6A8) protein is Acetylglutamate kinase.